The sequence spans 570 residues: Small ribosomal subunit protein uS2c (570 aa).

Residues 1–306 are N-terminal extension; that stretch reads MLNKKPPYLI…IKLNPLSTPQ (306 aa). TRAM domains follow at residues 28 to 89 and 104 to 169; these read KLIP…KLIK and ALTP…VATV.

The protein belongs to the universal ribosomal protein uS2 family.

The protein resides in the plastid. It is found in the chloroplast. The polypeptide is Small ribosomal subunit protein uS2c (rps2-1) (Chlamydomonas reinhardtii (Chlamydomonas smithii)).